The sequence spans 353 residues: Photosystem II protein D1 (353 aa).

Residue threonine 2 is modified to N-acetylthreonine. Threonine 2 bears the Phosphothreonine mark. 3 helical membrane-spanning segments follow: residues 29–46 (YIGWFGVLMIPTLLTATS), 118–133 (HFLLGVACYMGREWEL), and 142–156 (WIAVAYSAPVAAATA). Histidine 118 contacts chlorophyll a. Tyrosine 126 contacts pheophytin a. The [CaMn4O5] cluster site is built by aspartate 170 and glutamate 189. A helical membrane pass occupies residues 197-218 (FHMLGVAGVFGGSLFSAMHGSL). Position 198 (histidine 198) interacts with chlorophyll a. A quinone-binding positions include histidine 215 and 264–265 (SF). Histidine 215 contributes to the Fe cation binding site. Histidine 272 contacts Fe cation. A helical transmembrane segment spans residues 274 to 288 (FLAAWPVVGIWFTSL). Histidine 332, glutamate 333, aspartate 342, and alanine 344 together coordinate [CaMn4O5] cluster. The propeptide occupies 345–353 (AIDAPSVNG).

Belongs to the reaction center PufL/M/PsbA/D family. PSII is composed of 1 copy each of membrane proteins PsbA, PsbB, PsbC, PsbD, PsbE, PsbF, PsbH, PsbI, PsbJ, PsbK, PsbL, PsbM, PsbT, PsbX, PsbY, PsbZ, Psb30/Ycf12, at least 3 peripheral proteins of the oxygen-evolving complex and a large number of cofactors. It forms dimeric complexes. The D1/D2 heterodimer binds P680, chlorophylls that are the primary electron donor of PSII, and subsequent electron acceptors. It shares a non-heme iron and each subunit binds pheophytin, quinone, additional chlorophylls, carotenoids and lipids. D1 provides most of the ligands for the Mn4-Ca-O5 cluster of the oxygen-evolving complex (OEC). There is also a Cl(-1) ion associated with D1 and D2, which is required for oxygen evolution. The PSII complex binds additional chlorophylls, carotenoids and specific lipids. is required as a cofactor. In terms of processing, tyr-161 forms a radical intermediate that is referred to as redox-active TyrZ, YZ or Y-Z. C-terminally processed by CTPA; processing is essential to allow assembly of the oxygen-evolving complex and thus photosynthetic growth.

The protein resides in the plastid. It localises to the chloroplast thylakoid membrane. It carries out the reaction 2 a plastoquinone + 4 hnu + 2 H2O = 2 a plastoquinol + O2. Functionally, photosystem II (PSII) is a light-driven water:plastoquinone oxidoreductase that uses light energy to abstract electrons from H(2)O, generating O(2) and a proton gradient subsequently used for ATP formation. It consists of a core antenna complex that captures photons, and an electron transfer chain that converts photonic excitation into a charge separation. The D1/D2 (PsbA/PsbD) reaction center heterodimer binds P680, the primary electron donor of PSII as well as several subsequent electron acceptors. The chain is Photosystem II protein D1 from Coffea arabica (Arabian coffee).